Reading from the N-terminus, the 197-residue chain is Rac-like GTP-binding protein RHO1 (197 aa).

Residue 13–20 participates in GTP binding; it reads GDGAVGKT. Residues 35–43 carry the Effector region motif; that stretch reads YVPTVFDNF. GTP contacts are provided by residues 60-64 and 118-121; these read DTAGQ and TKLD. Cys194 carries the cysteine methyl ester modification. Residue Cys194 is the site of S-geranylgeranyl cysteine attachment. Positions 195-197 are cleaved as a propeptide — removed in mature form; sequence SIL.

This sequence belongs to the small GTPase superfamily. Rho family.

The protein resides in the cytoplasm. Its subcellular location is the membrane. Inactive GDP-bound Rho GTPases reside in the cytosol, are found in a complex with Rho GDP-dissociation inhibitors (Rho GDIs), and are released from the GDI protein in order to translocate to membranes upon activation. The sequence is that of Rac-like GTP-binding protein RHO1 (RHO1) from Beta vulgaris (Sugar beet).